The following is a 433-amino-acid chain: Phosphomethylpyrimidine synthase (433 aa).

Substrate is bound by residues Asn-69, Met-98, Tyr-127, His-163, 185–187 (SRG), 226–229 (DALR), and Glu-265. A Zn(2+)-binding site is contributed by His-269. Residue Tyr-292 coordinates substrate. Position 333 (His-333) interacts with Zn(2+). Residues Cys-409, Cys-412, and Cys-416 each coordinate [4Fe-4S] cluster.

It belongs to the ThiC family. It depends on [4Fe-4S] cluster as a cofactor.

The catalysed reaction is 5-amino-1-(5-phospho-beta-D-ribosyl)imidazole + S-adenosyl-L-methionine = 4-amino-2-methyl-5-(phosphooxymethyl)pyrimidine + CO + 5'-deoxyadenosine + formate + L-methionine + 3 H(+). The protein operates within cofactor biosynthesis; thiamine diphosphate biosynthesis. Catalyzes the synthesis of the hydroxymethylpyrimidine phosphate (HMP-P) moiety of thiamine from aminoimidazole ribotide (AIR) in a radical S-adenosyl-L-methionine (SAM)-dependent reaction. The chain is Phosphomethylpyrimidine synthase from Finegoldia magna (strain ATCC 29328 / DSM 20472 / WAL 2508) (Peptostreptococcus magnus).